The following is a 397-amino-acid chain: Elongation factor Tu (397 aa).

In terms of domain architecture, tr-type G spans 10-206; it reads KPHVNIGTIG…AVDDNVPEPE (197 aa). The interval 19 to 26 is G1; it reads GHVDHGKT. 19–26 provides a ligand contact to GTP; the sequence is GHVDHGKT. A Mg(2+)-binding site is contributed by Thr26. Positions 62-66 are G2; the sequence is GITIN. Residues 83-86 are G3; sequence DAPG. GTP contacts are provided by residues 83-87 and 138-141; these read DAPGH and NKSD. The segment at 138-141 is G4; the sequence is NKSD. Positions 176-178 are G5; that stretch reads SAL.

The protein belongs to the TRAFAC class translation factor GTPase superfamily. Classic translation factor GTPase family. EF-Tu/EF-1A subfamily. As to quaternary structure, monomer.

It is found in the cytoplasm. The enzyme catalyses GTP + H2O = GDP + phosphate + H(+). GTP hydrolase that promotes the GTP-dependent binding of aminoacyl-tRNA to the A-site of ribosomes during protein biosynthesis. The polypeptide is Elongation factor Tu (Brevibacterium linens).